The sequence spans 1512 residues: Sterol 3-beta-glucosyltransferase (1512 aa).

2 disordered regions span residues 22–50 and 150–222; these read FSGS…YHSL and DEHT…DTDV. Over residues 156 to 169 the composition is skewed to acidic residues; that stretch reads SEEEDSADKEEESI. Residues 190 to 222 are compositionally biased toward low complexity; the sequence is TTATLITTQITRTKTATTATPTPTPTSSVDTDV. Residues 296–331 enclose the GRAM 1 domain; sequence LQRVFDLSDEDTFCGNYSAWLIKDVLLQGHVYLTKD. The PH domain maps to 359-520; sequence SIVYSGNLGL…WCNNITKLIF (162 aa). A GRAM 2 domain is found at 816-880; the sequence is RNFQSHFSTN…TDIEEVRASR (65 aa). Serine 1024, arginine 1025, aspartate 1027, asparagine 1299, isoleucine 1328, histidine 1330, histidine 1343, serine 1346, glycine 1347, threonine 1348, aspartate 1367, and glutamine 1368 together coordinate UDP-alpha-D-glucose. Residues 1450-1512 are disordered; that stretch reads YKRHHPVPSG…NNSPSQNSSN (63 aa). A compositionally biased stretch (acidic residues) spans 1467 to 1493; it reads TDSDDYDDDEDDDESDKDDEEEEEENS. Polar residues predominate over residues 1501-1512; the sequence is GVNNSPSQNSSN.

This sequence belongs to the glycosyltransferase 28 family.

The protein resides in the cytoplasm. The protein localises to the membrane. It carries out the reaction a sterol + UDP-alpha-D-glucose = a sterol 3-beta-D-glucoside + UDP + H(+). The enzyme catalyses ergosterol + UDP-alpha-D-glucose = ergosteryl 3-beta-D-glucoside + UDP + H(+). Functionally, sterol glycosyltransferase responsible for the glycosylation of ergosterol to form ergosterol-glucoside. This is Sterol 3-beta-glucosyltransferase from Candida albicans (strain SC5314 / ATCC MYA-2876) (Yeast).